We begin with the raw amino-acid sequence, 279 residues long: Pantothenate synthetase (279 aa).

Met27–His34 contributes to the ATP binding site. The active-site Proton donor is His34. Position 58 (Gln58) interacts with (R)-pantoate. A beta-alanine-binding site is contributed by Gln58. An ATP-binding site is contributed by Gly144–Asp147. Gln150 provides a ligand contact to (R)-pantoate. Residues Val173 and Met181–Arg184 contribute to the ATP site.

The protein belongs to the pantothenate synthetase family. In terms of assembly, homodimer.

Its subcellular location is the cytoplasm. The enzyme catalyses (R)-pantoate + beta-alanine + ATP = (R)-pantothenate + AMP + diphosphate + H(+). It functions in the pathway cofactor biosynthesis; (R)-pantothenate biosynthesis; (R)-pantothenate from (R)-pantoate and beta-alanine: step 1/1. In terms of biological role, catalyzes the condensation of pantoate with beta-alanine in an ATP-dependent reaction via a pantoyl-adenylate intermediate. The chain is Pantothenate synthetase from Geobacter sp. (strain M21).